Consider the following 278-residue polypeptide: Polyamine aminopropyltransferase (278 aa).

Residues 3-240 (EGWFTEAVED…GWWSATLMVN (238 aa)) enclose the PABS domain. S-methyl-5'-thioadenosine is bound at residue Gln33. His64 and Asp88 together coordinate spermidine. S-methyl-5'-thioadenosine is bound by residues Glu108 and 139–140 (DG). The Proton acceptor role is filled by Asp158. 158-161 (DSTD) contacts spermidine. Pro165 provides a ligand contact to S-methyl-5'-thioadenosine.

It belongs to the spermidine/spermine synthase family. Homodimer or homotetramer.

The protein localises to the cytoplasm. It catalyses the reaction S-adenosyl 3-(methylsulfanyl)propylamine + putrescine = S-methyl-5'-thioadenosine + spermidine + H(+). The protein operates within amine and polyamine biosynthesis; spermidine biosynthesis; spermidine from putrescine: step 1/1. Functionally, catalyzes the irreversible transfer of a propylamine group from the amino donor S-adenosylmethioninamine (decarboxy-AdoMet) to putrescine (1,4-diaminobutane) to yield spermidine. In Halorhodospira halophila (strain DSM 244 / SL1) (Ectothiorhodospira halophila (strain DSM 244 / SL1)), this protein is Polyamine aminopropyltransferase.